A 479-amino-acid chain; its full sequence is Aspartyl/glutamyl-tRNA(Asn/Gln) amidotransferase subunit B (479 aa).

This sequence belongs to the GatB/GatE family. GatB subfamily. As to quaternary structure, heterotrimer of A, B and C subunits.

The enzyme catalyses L-glutamyl-tRNA(Gln) + L-glutamine + ATP + H2O = L-glutaminyl-tRNA(Gln) + L-glutamate + ADP + phosphate + H(+). The catalysed reaction is L-aspartyl-tRNA(Asn) + L-glutamine + ATP + H2O = L-asparaginyl-tRNA(Asn) + L-glutamate + ADP + phosphate + 2 H(+). Allows the formation of correctly charged Asn-tRNA(Asn) or Gln-tRNA(Gln) through the transamidation of misacylated Asp-tRNA(Asn) or Glu-tRNA(Gln) in organisms which lack either or both of asparaginyl-tRNA or glutaminyl-tRNA synthetases. The reaction takes place in the presence of glutamine and ATP through an activated phospho-Asp-tRNA(Asn) or phospho-Glu-tRNA(Gln). This is Aspartyl/glutamyl-tRNA(Asn/Gln) amidotransferase subunit B from Geotalea uraniireducens (strain Rf4) (Geobacter uraniireducens).